Here is a 300-residue protein sequence, read N- to C-terminus: Spermatogenesis-associated serine-rich protein 1 (300 aa).

The segment covering 1–10 has biased composition (polar residues); the sequence is MSPSMLTGNS. Disordered stretches follow at residues 1 to 42 and 64 to 91; these read MSPS…MTEV and TPSGKSVSSSSSVETGPSVSEPPGLPRV. Residues 27–42 show a composition bias toward basic and acidic residues; that stretch reads QLEKVPEKRDSGMTEV. The segment covering 64–85 has biased composition (low complexity); it reads TPSGKSVSSSSSVETGPSVSEP. Serine 113 is subject to Phosphoserine.

The sequence is that of Spermatogenesis-associated serine-rich protein 1 (SPATS1) from Homo sapiens (Human).